The sequence spans 252 residues: Small ribosomal subunit protein uS2 (252 aa).

It belongs to the universal ribosomal protein uS2 family.

The chain is Small ribosomal subunit protein uS2 from Ruminiclostridium cellulolyticum (strain ATCC 35319 / DSM 5812 / JCM 6584 / H10) (Clostridium cellulolyticum).